The sequence spans 467 residues: Ethanolamine-phosphate phospho-lyase homolog 1 (467 aa).

Position 307 is an N6-(pyridoxal phosphate)lysine (lysine 307).

The protein belongs to the class-III pyridoxal-phosphate-dependent aminotransferase family. Requires pyridoxal 5'-phosphate as cofactor.

The protein is Ethanolamine-phosphate phospho-lyase homolog 1 of Caenorhabditis elegans.